Here is a 79-residue protein sequence, read N- to C-terminus: UPF0180 protein Bcer98_1118 (79 aa).

It belongs to the UPF0180 family.

The protein is UPF0180 protein Bcer98_1118 of Bacillus cytotoxicus (strain DSM 22905 / CIP 110041 / 391-98 / NVH 391-98).